Consider the following 126-residue polypeptide: MAKLTQEEILEAIAGMTVLELSELVKAVEDKFGVKAAAPAVAVAAAAPAAAAAEEKTEFNVELTSAAADKKIAVIKVVREITGLGLKEAKDLVDGAPKVIKENVAKAEAEEMKKKVTEAGGVVTLK.

It belongs to the bacterial ribosomal protein bL12 family. Homodimer. Part of the ribosomal stalk of the 50S ribosomal subunit. Forms a multimeric L10(L12)X complex, where L10 forms an elongated spine to which 2 to 4 L12 dimers bind in a sequential fashion. Binds GTP-bound translation factors.

Its function is as follows. Forms part of the ribosomal stalk which helps the ribosome interact with GTP-bound translation factors. Is thus essential for accurate translation. The protein is Large ribosomal subunit protein bL12 of Elusimicrobium minutum (strain Pei191).